A 387-amino-acid polypeptide reads, in one-letter code: 8-amino-7-oxononanoate synthase (387 aa).

A pyridoxal 5'-phosphate-binding site is contributed by 109 to 110 (GY). A substrate-binding site is contributed by His-134. Pyridoxal 5'-phosphate contacts are provided by Ser-182, His-214, and Thr-242. Lys-245 is modified (N6-(pyridoxal phosphate)lysine). Thr-359 contacts substrate.

This sequence belongs to the class-II pyridoxal-phosphate-dependent aminotransferase family. BioF subfamily. In terms of assembly, homodimer. The cofactor is pyridoxal 5'-phosphate.

It catalyses the reaction 6-carboxyhexanoyl-[ACP] + L-alanine + H(+) = (8S)-8-amino-7-oxononanoate + holo-[ACP] + CO2. Its pathway is cofactor biosynthesis; biotin biosynthesis. Catalyzes the decarboxylative condensation of pimeloyl-[acyl-carrier protein] and L-alanine to produce 8-amino-7-oxononanoate (AON), [acyl-carrier protein], and carbon dioxide. In Haemophilus ducreyi (strain 35000HP / ATCC 700724), this protein is 8-amino-7-oxononanoate synthase.